Here is a 65-residue protein sequence, read N- to C-terminus: Large ribosomal subunit protein bL35 (65 aa).

Belongs to the bacterial ribosomal protein bL35 family.

This chain is Large ribosomal subunit protein bL35, found in Enterobacter sp. (strain 638).